The following is a 1758-amino-acid chain: Y' element ATP-dependent helicase YJL225C (1758 aa).

The Helicase ATP-binding domain occupies 668-845; sequence EIYMADTPSV…LQRIGLTGLA (178 aa). 681-688 lines the ATP pocket; it reads APPGYGKT. In terms of domain architecture, Helicase C-terminal spans 900-1051; sequence ALKLLLALFE…EFYGLESKKG (152 aa). Low complexity predominate over residues 1142 to 1360; that stretch reads NVRTNATTNA…ATTTESTNAS (219 aa). Residues 1142–1384 form a disordered region; that stretch reads NVRTNATTNA…RFHPVTDINK (243 aa). Positions 1361 to 1384 are enriched in basic and acidic residues; it reads AKEDANKDGNAEDNRFHPVTDINK.

This sequence belongs to the helicase family. Yeast subtelomeric Y' repeat subfamily.

Its function is as follows. Catalyzes DNA unwinding and is involved in telomerase-independent telomere maintenance. The polypeptide is Y' element ATP-dependent helicase YJL225C (Saccharomyces cerevisiae (strain ATCC 204508 / S288c) (Baker's yeast)).